The primary structure comprises 214 residues: Octanoyltransferase (214 aa).

The BPL/LPL catalytic domain maps to 35–211 (KSNIDFIWLG…IIQEEFYFNF (177 aa)). Substrate-binding positions include 75-82 (RGGEVTCH), 142-144 (SIG), and 155-157 (GFS). Residue cysteine 173 is the Acyl-thioester intermediate of the active site.

The protein belongs to the LipB family.

The protein resides in the cytoplasm. The enzyme catalyses octanoyl-[ACP] + L-lysyl-[protein] = N(6)-octanoyl-L-lysyl-[protein] + holo-[ACP] + H(+). The protein operates within protein modification; protein lipoylation via endogenous pathway; protein N(6)-(lipoyl)lysine from octanoyl-[acyl-carrier-protein]: step 1/2. Functionally, catalyzes the transfer of endogenously produced octanoic acid from octanoyl-acyl-carrier-protein onto the lipoyl domains of lipoate-dependent enzymes. Lipoyl-ACP can also act as a substrate although octanoyl-ACP is likely to be the physiological substrate. This is Octanoyltransferase from Prochlorococcus marinus (strain MIT 9515).